The primary structure comprises 1783 residues: Trans-splicing factor Raa3, chloroplastic (1783 aa).

A chloroplast-targeting transit peptide spans 1-40; the sequence is MKADLATAKGSSPAFSAPRTYRARLLSRCLNKCFNTVLVS. Disordered regions lie at residues 97–378, 420–484, 563–610, 652–709, 918–971, 1395–1427, 1476–1506, and 1620–1639; these read ATTH…VGVN, ATSA…VAAQ, ARVG…SATK, STEP…SPAA, AAPT…QRAS, RDAKRHVRQSAAAAAAAAAAAQDQRQEQHQQHQ, PAPAHMQQQPQSSGTGCQKSRRRRMRYRRSR, and VKGRGRGRRTAARATTDVQG. A compositionally biased stretch (gly residues) spans 105-118; it reads DSGGQGPAAAGGRG. 3 stretches are compositionally biased toward low complexity: residues 126–157, 186–205, and 224–242; these read QAAASAATTVSAAPQTGATKPAATAKTTPQRP, AVDAASDAAPDVAAASPAPA, and AGKPRASGRAPAAPGVGPQ. Over residues 256-273 the composition is skewed to basic and acidic residues; that stretch reads DESHMGLTHRDQGHDERI. The segment covering 277–289 has biased composition (low complexity); the sequence is AGEAWKAGAVAAP. The span at 307–316 shows a compositional bias: polar residues; that stretch reads LASSALGTHS. 7 stretches are compositionally biased toward low complexity: residues 343 to 374, 420 to 436, 577 to 599, 655 to 669, 676 to 709, 928 to 970, and 1403 to 1417; these read SGSSSSSSGRNSSSNSNTSTSSTSNGVTITSN, ATSAASSSTSSASSSSS, RPVQGQSGQVPQVGQGPVQSQPG, PLAASAPTTSLASAS, SSSNAHSSAAASEAAAGTVRAPTDTAAPAASPAA, SAAA…PQRA, and QSAAAAAAAAAAAQD. 2 stretches are compositionally biased toward basic residues: residues 1494 to 1506 and 1620 to 1630; these read KSRRRRMRYRRSR and VKGRGRGRRTA. Residues 1713-1772 enclose the RAP domain; sequence LAVGAAAGGAVIRNSRWLLSGAGALRRRLLTHAGWLVVPVRERQWKDLRSAEQQRRVVRE.

Part of a 1700 kDa complex that includes the precursor RNA to exon 1 and the tscA RNA.

Its subcellular location is the plastid. The protein resides in the chloroplast stroma. Functionally, required for trans-splicing of exons 1 and 2 of the chloroplast encoded psaA mRNA (a group II intron). May be required for stability of the chloroplast RNA-protein complex in which it is found. This is Trans-splicing factor Raa3, chloroplastic (RAA3) from Chlamydomonas reinhardtii (Chlamydomonas smithii).